An 86-amino-acid chain; its full sequence is Large ribosomal subunit protein bL31B (86 aa).

The protein belongs to the bacterial ribosomal protein bL31 family. Type B subfamily. In terms of assembly, part of the 50S ribosomal subunit.

The polypeptide is Large ribosomal subunit protein bL31B (Cupriavidus pinatubonensis (strain JMP 134 / LMG 1197) (Cupriavidus necator (strain JMP 134))).